Reading from the N-terminus, the 187-residue chain is UPF0301 protein SO_3346 (187 aa).

Belongs to the UPF0301 (AlgH) family.

The protein is UPF0301 protein SO_3346 of Shewanella oneidensis (strain ATCC 700550 / JCM 31522 / CIP 106686 / LMG 19005 / NCIMB 14063 / MR-1).